The primary structure comprises 896 residues: Alanine--tRNA ligase (896 aa).

His599, His603, Cys707, and His711 together coordinate Zn(2+).

The protein belongs to the class-II aminoacyl-tRNA synthetase family. The cofactor is Zn(2+).

It is found in the cytoplasm. The catalysed reaction is tRNA(Ala) + L-alanine + ATP = L-alanyl-tRNA(Ala) + AMP + diphosphate. In terms of biological role, catalyzes the attachment of alanine to tRNA(Ala) in a two-step reaction: alanine is first activated by ATP to form Ala-AMP and then transferred to the acceptor end of tRNA(Ala). Also edits incorrectly charged Ser-tRNA(Ala) and Gly-tRNA(Ala) via its editing domain. This chain is Alanine--tRNA ligase, found in Pyrobaculum calidifontis (strain DSM 21063 / JCM 11548 / VA1).